The sequence spans 565 residues: MSDQKLSVNEYLKTDSNYLRGTIEEGLDTSLTGAFNDADQQLIKFHGFYQQDDRDLRNERKEQKLEPLYSFMLRARVAGGVCTPKQWLGVDKIASTLTSSNSIRLTTRQTFQYHGIPKRNLKTLIQDLDREALDSIAACGDVNRNVMCNPNPVESKLHQQAYYWAKKLSDNYLPRTKAYAEIWLGDDKVAVSESEEVEPVYGKTYLPRKFKMAVAVPPDNDVDVYTNDLGFIAVAEDGELVGFNMVAGGGMGSTHGEVATFPRLGDDFGFIKAEDCLKFAEAVLKVQRDWGNRSDRKQSRLKYTIVKHGFEAFKAEVEQRAGVKFEPKREVVIGDRGDRYGWIKGVDNNWHLTLFIEGGRIKDLPGQPLQTGLREIALVHKGDFRMTANQNIIIAGVAEEDKAQIEALARSHGLMGKLISPTRGHSIACVALPTCALAMAEAERYFPDFMTKVEALQEKHGFLEQPIVIRMTGCPNGCARPFAAEIGLVGKAPGRYNLYLGASFEGTRLNKLYRENIQEAEILAALDELFARYVKEREAGETFGNFTVRVGVVKAVIDAAKDFHG.

The [4Fe-4S] cluster site is built by Cys-429, Cys-435, Cys-474, and Cys-478. Cys-478 provides a ligand contact to siroheme.

This sequence belongs to the nitrite and sulfite reductase 4Fe-4S domain family. In terms of assembly, alpha(8)-beta(8). The alpha component is a flavoprotein, the beta component is a hemoprotein. Siroheme serves as cofactor. It depends on [4Fe-4S] cluster as a cofactor.

The enzyme catalyses hydrogen sulfide + 3 NADP(+) + 3 H2O = sulfite + 3 NADPH + 4 H(+). The protein operates within sulfur metabolism; hydrogen sulfide biosynthesis; hydrogen sulfide from sulfite (NADPH route): step 1/1. Its function is as follows. Component of the sulfite reductase complex that catalyzes the 6-electron reduction of sulfite to sulfide. This is one of several activities required for the biosynthesis of L-cysteine from sulfate. This Shewanella loihica (strain ATCC BAA-1088 / PV-4) protein is Sulfite reductase [NADPH] hemoprotein beta-component.